A 221-amino-acid chain; its full sequence is Probable endo-1,4-beta-xylanase B (221 aa).

Positions Met1–Ala19 are cleaved as a signal peptide. A GH11 domain is found at Gln33–Ser221. Glu117 (nucleophile) is an active-site residue. The Proton donor role is filled by Glu208.

It belongs to the glycosyl hydrolase 11 (cellulase G) family.

The protein localises to the secreted. The enzyme catalyses Endohydrolysis of (1-&gt;4)-beta-D-xylosidic linkages in xylans.. Its pathway is glycan degradation; xylan degradation. In terms of biological role, endo-1,4-beta-xylanase involved in the hydrolysis of xylan, a major structural heterogeneous polysaccharide found in plant biomass representing the second most abundant polysaccharide in the biosphere, after cellulose. The chain is Probable endo-1,4-beta-xylanase B (xlnB) from Aspergillus clavatus (strain ATCC 1007 / CBS 513.65 / DSM 816 / NCTC 3887 / NRRL 1 / QM 1276 / 107).